A 219-amino-acid polypeptide reads, in one-letter code: Octanoyltransferase (219 aa).

A BPL/LPL catalytic domain is found at 31–206 (DEDVDQIWLV…ELVELLGYDQ (176 aa)). Substrate is bound by residues 70–77 (RGGQVTYH), 137–139 (SLG), and 150–152 (GLA). Cys168 (acyl-thioester intermediate) is an active-site residue.

Belongs to the LipB family.

The protein resides in the cytoplasm. The catalysed reaction is octanoyl-[ACP] + L-lysyl-[protein] = N(6)-octanoyl-L-lysyl-[protein] + holo-[ACP] + H(+). It functions in the pathway protein modification; protein lipoylation via endogenous pathway; protein N(6)-(lipoyl)lysine from octanoyl-[acyl-carrier-protein]: step 1/2. Its function is as follows. Catalyzes the transfer of endogenously produced octanoic acid from octanoyl-acyl-carrier-protein onto the lipoyl domains of lipoate-dependent enzymes. Lipoyl-ACP can also act as a substrate although octanoyl-ACP is likely to be the physiological substrate. The chain is Octanoyltransferase from Vibrio atlanticus (strain LGP32) (Vibrio splendidus (strain Mel32)).